Reading from the N-terminus, the 453-residue chain is Ribosomal protein uS12 methylthiotransferase RimO (453 aa).

The MTTase N-terminal domain occupies 3–118 (KKVGIISLGC…IAKVIEEFYS (116 aa)). The [4Fe-4S] cluster site is built by Cys12, Cys48, Cys81, Cys162, Cys166, and Cys169. Residues 148 to 378 (STNSGYAYLK…MQLQKEIVQR (231 aa)) enclose the Radical SAM core domain. The TRAM domain maps to 381–449 (ESRLEKVYKT…DYDLIGEVIN (69 aa)).

This sequence belongs to the methylthiotransferase family. RimO subfamily. It depends on [4Fe-4S] cluster as a cofactor.

The protein localises to the cytoplasm. The enzyme catalyses L-aspartate(89)-[ribosomal protein uS12]-hydrogen + (sulfur carrier)-SH + AH2 + 2 S-adenosyl-L-methionine = 3-methylsulfanyl-L-aspartate(89)-[ribosomal protein uS12]-hydrogen + (sulfur carrier)-H + 5'-deoxyadenosine + L-methionine + A + S-adenosyl-L-homocysteine + 2 H(+). Functionally, catalyzes the methylthiolation of an aspartic acid residue of ribosomal protein uS12. This chain is Ribosomal protein uS12 methylthiotransferase RimO, found in Acetivibrio thermocellus (strain ATCC 27405 / DSM 1237 / JCM 9322 / NBRC 103400 / NCIMB 10682 / NRRL B-4536 / VPI 7372) (Clostridium thermocellum).